The chain runs to 128 residues: UPF0325 protein YaeH (128 aa).

This sequence belongs to the UPF0325 family.

This is UPF0325 protein YaeH from Salmonella agona (strain SL483).